The sequence spans 192 residues: Ion-translocating oxidoreductase complex subunit B (192 aa).

The hydrophobic stretch occupies residues 1 to 26; sequence MNAFWIAVAAVSLLGLAFGAILGYAS. The 60-residue stretch at 32 to 91 folds into the 4Fe-4S domain; it reads EDDPVVEKIDEILPQSQCGQCGYPGCRPYAEAISCNGEKINRCAPGGEAVMLKIAELLNV. The [4Fe-4S] cluster site is built by cysteine 49, cysteine 52, cysteine 57, cysteine 74, cysteine 117, cysteine 120, cysteine 123, cysteine 127, cysteine 147, cysteine 150, cysteine 153, and cysteine 157. 2 consecutive 4Fe-4S ferredoxin-type domains span residues 108-137 and 138-167; these read MVAVIDENNCIGCTKCIQACPVDAIVGATR and AMHTVMSDLCTGCNLCVDPCPTHCISLQPV.

This sequence belongs to the 4Fe4S bacterial-type ferredoxin family. RnfB subfamily. In terms of assembly, the complex is composed of six subunits: RsxA, RsxB, RsxC, RsxD, RsxE and RsxG. The cofactor is [4Fe-4S] cluster.

It is found in the cell inner membrane. Functionally, part of a membrane-bound complex that couples electron transfer with translocation of ions across the membrane. Required to maintain the reduced state of SoxR. The chain is Ion-translocating oxidoreductase complex subunit B from Escherichia coli O6:H1 (strain CFT073 / ATCC 700928 / UPEC).